A 313-amino-acid polypeptide reads, in one-letter code: E3 ubiquitin-protein ligase SGIP1 (313 aa).

The region spanning 16–65 is the F-box domain; it reads REYSKEIPIDLLIEIFSRLSTGDIARCRCVSKIWSSVPRLRDFTELFLKI.

As to quaternary structure, interacts with SGS3 in cytoplasmic granules.

It is found in the cytoplasmic granule. The enzyme catalyses S-ubiquitinyl-[E2 ubiquitin-conjugating enzyme]-L-cysteine + [acceptor protein]-L-lysine = [E2 ubiquitin-conjugating enzyme]-L-cysteine + N(6)-ubiquitinyl-[acceptor protein]-L-lysine.. It functions in the pathway protein degradation; proteasomal ubiquitin-dependent pathway. Its pathway is protein modification; protein ubiquitination. E3 ubiquitin-protein ligase which triggers the ubiquitination and subsequent degradation of SGS3 in response to heat. Involved in the mechanisms necessary for quick response to heat and subsequent heritable transgenerational memory of heat acclimation (global warming) such as early flowering and attenuated immunity; this process includes epigenetic regulation as well as post-transcriptional gene silencing (PTGS). In response to heat, HSFA2 is activated and promotes the expression of REF6 which in turn derepresses HSFA2, thus establishing an inheritable feedback loop able to trigger SGIP1 and subsequent SGIP1-mediated SGS3 degradation; this prevents the biosynthesis of trans-acting siRNA (tasiRNA) and leads to the release of HTT5, which drives early flowering but attenuates immunity. This is E3 ubiquitin-protein ligase SGIP1 from Arabidopsis thaliana (Mouse-ear cress).